Consider the following 574-residue polypeptide: MNQTRVFLIFAWLMVAALLWMEWGKDKAAANAPVAAATQAVPAARDPDAAAPSAANVPSAQPIPQAGAPGTVPATSSTAATPAAAGAAPVVTLTSDVLRLKLDGRSVLDAELLQFPQTKDGTEPVSLLTEDPAHPYNATSGWASEHSPVPGVGGFRAEQPGTTFEMAKGQNTLVVPFVWNGPDGVSIRRTFTLERGRYAISIKDEVINKSGAPWNGYVFRKLSRVPTILSRGMTNPDSFSFNGATWYSPQEGYERRAFKDYMDDGGLNRQITGGWVALLQHHFFTAWIPQKDQASLYVLAQDGPRDVAELRGPAFTVAPGQTASTEARLWVGPKLVNLIAKEDVKGLDRVVDYSRFSIMAIIGQGLFWVLSHLHSFLHNWGWAIIGLVVLLRLALYPLSAAQYKSGAKMRRFQPRLAQLKERYGDDRVKYQQATMELFKKEKINPMGGCLPLLIQMPIFFALYWVLVESVELRQAPWLGWIQDLTARDPYFILPLLNISIMWATQKLTPTPGMDPMQAKMMQFMPLVFGVMMAFMPAGLVLYWVVNGGLGLLIQWWMIRQHGEKPSKIIQANAK.

Residues 6–26 (VFLIFAWLMVAALLWMEWGKD) traverse the membrane as a helical segment. Residues 45–77 (RDPDAAAPSAANVPSAQPIPQAGAPGTVPATSS) are disordered. 5 consecutive transmembrane segments (helical) span residues 356 to 376 (FSIMAIIGQGLFWVLSHLHSF), 380 to 400 (WGWAIIGLVVLLRLALYPLSA), 447 to 467 (GGCLPLLIQMPIFFALYWVLV), 489 to 509 (PYFILPLLNISIMWATQKLTP), and 525 to 545 (PLVFGVMMAFMPAGLVLYWVV).

The protein belongs to the OXA1/ALB3/YidC family. Type 1 subfamily. As to quaternary structure, interacts with the Sec translocase complex via SecD. Specifically interacts with transmembrane segments of nascent integral membrane proteins during membrane integration.

The protein resides in the cell inner membrane. Functionally, required for the insertion and/or proper folding and/or complex formation of integral membrane proteins into the membrane. Involved in integration of membrane proteins that insert both dependently and independently of the Sec translocase complex, as well as at least some lipoproteins. Aids folding of multispanning membrane proteins. The polypeptide is Membrane protein insertase YidC (Xanthomonas euvesicatoria pv. vesicatoria (strain 85-10) (Xanthomonas campestris pv. vesicatoria)).